A 228-amino-acid chain; its full sequence is Uracil-DNA glycosylase (228 aa).

The active-site Proton acceptor is the aspartate 64.

Belongs to the uracil-DNA glycosylase (UDG) superfamily. UNG family.

It localises to the cytoplasm. It catalyses the reaction Hydrolyzes single-stranded DNA or mismatched double-stranded DNA and polynucleotides, releasing free uracil.. In terms of biological role, excises uracil residues from the DNA which can arise as a result of misincorporation of dUMP residues by DNA polymerase or due to deamination of cytosine. In Yersinia pseudotuberculosis serotype IB (strain PB1/+), this protein is Uracil-DNA glycosylase.